The chain runs to 55 residues: MKTLSLFLVLVCLLGLVQSWEWPWNRKPTKYPIPSPNPRDKWCRLNLGPAWGGRC.

An N-terminal signal peptide occupies residues 1–19 (MKTLSLFLVLVCLLGLVQS). Residues P28, P32, P34, and P38 each carry the hydroxyproline modification. C43 and C55 are disulfide-bonded.

Main cells of the accessory glands of males (paragonial gland).

The protein resides in the secreted. Its function is as follows. Represses female sexual receptivity and stimulates oviposition. The polypeptide is Accessory gland-specific peptide 70A (Acp70A) (Drosophila mauritiana (Fruit fly)).